The following is a 734-amino-acid chain: Protein SKG6 (734 aa).

The interval 30-68 (TRRDDSDSSSSSASSTKNSKSAECTGSKQQCQLPTDSSH) is disordered. Over residues 37–51 (SSSSSASSTKNSKSA) the composition is skewed to low complexity. Over residues 53-68 (CTGSKQQCQLPTDSSH) the composition is skewed to polar residues. The helical transmembrane segment at 72–96 (VTVGVAVAVPVGVIIIVLAVILCIV) threads the bilayer. Ser137 carries the phosphoserine modification. Position 169 is a phosphothreonine (Thr169). A phosphoserine mark is found at Ser191, Ser193, and Ser219. Thr221 carries the post-translational modification Phosphothreonine. Phosphoserine is present on residues Ser222 and Ser251. The tract at residues 239–327 (RFQESESFRS…LRFGKDDDNY (89 aa)) is disordered. Residues 253–273 (IHNNQLSRGSATEGANKQFTF) show a composition bias toward polar residues. The segment covering 280-299 (SSSVSEEAEVLNESNESASN) has biased composition (low complexity). Positions 309-327 (SSEKTHERNLRFGKDDDNY) are enriched in basic and acidic residues. At Ser369 the chain carries Phosphoserine. The disordered stretch occupies residues 647–671 (DLTAKPSYKPAGSFRSVSATNSRNN). Residues 661 to 671 (RSVSATNSRNN) are compositionally biased toward polar residues. A phosphoserine mark is found at Ser672 and Ser717. A disordered region spans residues 707 to 734 (SVGGILPHSGSQDDLRKQLGSSHNYTVN). The segment covering 725 to 734 (LGSSHNYTVN) has biased composition (polar residues).

It belongs to the SKG6/TOS2 family. As to quaternary structure, interacts with ZDS1 and ZDS2. Post-translationally, phosphorylated by CDC28.

It is found in the membrane. In terms of biological role, may be involved in the polarity establishment process. Suppresses the lethality of KEX2-GAS1 double null mutant when overexpressed. This chain is Protein SKG6 (SKG6), found in Saccharomyces cerevisiae (strain ATCC 204508 / S288c) (Baker's yeast).